We begin with the raw amino-acid sequence, 273 residues long: Dermonecrotic toxin LspiSicTox-betaIE1i (273 aa).

Glu-25 and Asp-27 together coordinate Mg(2+). Residue His-41 is the Nucleophile of the active site. An intrachain disulfide couples Cys-45 to Cys-51. Asp-85 is a binding site for Mg(2+).

The protein belongs to the arthropod phospholipase D family. Class I subfamily. Requires Mg(2+) as cofactor. As to expression, expressed by the venom gland.

It is found in the secreted. It carries out the reaction an N-(acyl)-sphingosylphosphocholine = an N-(acyl)-sphingosyl-1,3-cyclic phosphate + choline. The enzyme catalyses an N-(acyl)-sphingosylphosphoethanolamine = an N-(acyl)-sphingosyl-1,3-cyclic phosphate + ethanolamine. The catalysed reaction is a 1-acyl-sn-glycero-3-phosphocholine = a 1-acyl-sn-glycero-2,3-cyclic phosphate + choline. It catalyses the reaction a 1-acyl-sn-glycero-3-phosphoethanolamine = a 1-acyl-sn-glycero-2,3-cyclic phosphate + ethanolamine. Dermonecrotic toxins cleave the phosphodiester linkage between the phosphate and headgroup of certain phospholipids (sphingolipid and lysolipid substrates), forming an alcohol (often choline) and a cyclic phosphate. This toxin acts on sphingomyelin (SM). It may also act on ceramide phosphoethanolamine (CPE), lysophosphatidylcholine (LPC) and lysophosphatidylethanolamine (LPE), but not on lysophosphatidylserine (LPS), and lysophosphatidylglycerol (LPG). It acts by transphosphatidylation, releasing exclusively cyclic phosphate products as second products. Induces dermonecrosis, hemolysis, increased vascular permeability, edema, inflammatory response, and platelet aggregation. The sequence is that of Dermonecrotic toxin LspiSicTox-betaIE1i from Loxosceles spinulosa (Recluse spider).